The primary structure comprises 36 residues: Photosystem I reaction center subunit VIII (36 aa).

The helical transmembrane segment at Ser8 to Leu28 threads the bilayer.

The protein belongs to the PsaI family.

The protein localises to the plastid. It is found in the chloroplast thylakoid membrane. Its function is as follows. May help in the organization of the PsaL subunit. The sequence is that of Photosystem I reaction center subunit VIII from Brassica oleracea (Wild cabbage).